The primary structure comprises 358 residues: Methionine import ATP-binding protein MetN (358 aa).

Residues 2-247 (ITTTGLTKVY…PGSELAHELF (246 aa)) form the ABC transporter domain. 38 to 45 (GQSGAGKS) serves as a coordination point for ATP.

This sequence belongs to the ABC transporter superfamily. Methionine importer (TC 3.A.1.24) family. As to quaternary structure, the complex is composed of two ATP-binding proteins (MetN), two transmembrane proteins (MetI) and a solute-binding protein (MetQ).

It is found in the cell membrane. The catalysed reaction is L-methionine(out) + ATP + H2O = L-methionine(in) + ADP + phosphate + H(+). It carries out the reaction D-methionine(out) + ATP + H2O = D-methionine(in) + ADP + phosphate + H(+). Its function is as follows. Part of the ABC transporter complex MetNIQ involved in methionine import. Responsible for energy coupling to the transport system. In Streptomyces griseus, this protein is Methionine import ATP-binding protein MetN.